The sequence spans 1165 residues: MRWRLPGARTTLPASVALLLLPILVAPQQLQEHDDLPSTLSVPLSPTQRSFDHHPLPTINVKSNDASALATMALAGPGRAVRARPAQASSSSAGLAPQLHARSLQDWEVEDFVLLATVDGSIHARDRRTGAARWALEVPSSPMVESIYHRANRSSFDRAQPEDDFLWIVEPSQDGNLYIYSPGPDAGLQKLGLTVKELVEQTPYSGTDPAVTYTARKETTLYTVDARTGNILQVFSSRGPITSGHGCRKVDGFDLEAEECDTPSGTLVLGRVEYAVAIQNTETGDPICTLKYSEWTANNRDMDLQSQYFRTMDQSHIYSMHDGVVLGFDHSRMDRPRYTQRFSSPVVRVFDVARPINVESPEAATPLVLLSQPLQPPDPDYGSLDDRDARVFVDCTSAGGWFAMSEETYPLVTGRAKMAQCYEKDYLRHGQPLTSLPTSQQRDALAGVHSLNGPRVVRNTPSISGPSPLELANDTPRELMRSPSELALPPALRHSTIIRKGWDNAVDIFVTILLLFFGAFIYFNSHNIQELAKQKLDVKNIIASYAQPPLSTPSTPVVESTHFKRDSSPSRPISNLTVEVTVPEEQQEGDATPKPKRDRSAVGPDSTPRVKIREPSRGPDSDDDVEELDQAASPEKPKKKARRGRRGGKNHRRGKKPDSEGESKDQADRVVDQVNNLQPQSRLEPDLQLVRTVSNDIIEMDGVLQIGRLRVFSDVVLGHGSHGTVVYRGSFDGRDVAVKRMLVEFYDIASHEVGLLQESDDHNNVIRYFCREQAAGFLYIALELCPASLQDLIERPGDYPQLVQGGLDMPDILRQIIAGVRYLHSLKIVHRDLKPQNILVAMPRGRTGSRSLRLLISDFGLCKKLDDNQSSFRATTAHAAGTSGWRAPELLVDDDNRSAIQGGESQHTESSEPAVVDPQTNRRATRAIDIFSLGCVFYYVLTRGSHPFDKNGKFMREANIVKGNFNLDELQRLGDYAFEADDLIRSMLSLDPRKRLAPLCSSLAFRLFTDLFPRPDASAVLMHPFFWNPSDRLSFLCDVSDHFEFEPRDPPSDALLCLESVACRVMGPEMDFLRLLPKDFKDNLGKQRKYTGSKMLDLLRALRNKRNHYNDMPAHLKAHIGGLPEGYLNFWTVRFPSLLMSCHSVIVELRLTKIDRFKRYFTPVE.

Residues 1–27 form the signal peptide; it reads MRWRLPGARTTLPASVALLLLPILVAP. The Lumenal segment spans residues 28–504; it reads QQLQEHDDLP…STIIRKGWDN (477 aa). N-linked (GlcNAc...) asparagine glycosylation is present at N152. The chain crosses the membrane as a helical span at residues 505-525; the sequence is AVDIFVTILLLFFGAFIYFNS. At 526–1165 the chain is on the cytoplasmic side; sequence HNIQELAKQK…RFKRYFTPVE (640 aa). The tract at residues 547 to 668 is disordered; the sequence is QPPLSTPSTP…SEGESKDQAD (122 aa). Basic and acidic residues-rich tracts occupy residues 591–600 and 611–620; these read ATPKPKRDRS and KIREPSRGPD. Positions 637–655 are enriched in basic residues; it reads PKKKARRGRRGGKNHRRGK. Basic and acidic residues predominate over residues 656–668; that stretch reads KPDSEGESKDQAD. The region spanning 711–1026 is the Protein kinase domain; the sequence is VFSDVVLGHG…ASAVLMHPFF (316 aa). ATP-binding positions include 717–725 and K739; that span reads LGHGSHGTV. The active-site Proton acceptor is the D832. The disordered stretch occupies residues 899–919; it reads AIQGGESQHTESSEPAVVDPQ. Residues 1029–1163 enclose the KEN domain; it reads PSDRLSFLCD…IDRFKRYFTP (135 aa).

It belongs to the protein kinase superfamily. Ser/Thr protein kinase family. Homodimer; in response to the accumulation of unfolded proteins. Mg(2+) is required as a cofactor. Post-translationally, autophosphorylated mainly on serine residues.

It localises to the membrane. It catalyses the reaction L-seryl-[protein] + ATP = O-phospho-L-seryl-[protein] + ADP + H(+). The catalysed reaction is L-threonyl-[protein] + ATP = O-phospho-L-threonyl-[protein] + ADP + H(+). Its activity is regulated as follows. 8-formyl-7-hydroxy-4-methylcoumarin inhibits the endonuclease activity and prebvent the splicing if the hacA mRNA. The kinase domain is activated by trans-autophosphorylation. Kinase activity is required for activation of the endoribonuclease domain. In terms of biological role, senses unfolded proteins in the lumen of the endoplasmic reticulum (ER) via its N-terminal domain which leads to enzyme auto-activation. The active endoribonuclease domain responds by cleaving an intron from the downstream cytoplasmic mRNA hacA, allowing for the translation of a transcription factor that coordinates a series of adaptive responses that are collectively known as the unfolded protein response (UPR). In the absence of ER stress, ireA controls dual signaling circuits that are both hacA-dependent and hacA-independent and which contribute to the expression of traits that are essential for virulence. The sequence is that of Serine/threonine-protein kinase/endoribonuclease ireA from Aspergillus fumigatus (strain ATCC MYA-4609 / CBS 101355 / FGSC A1100 / Af293) (Neosartorya fumigata).